The primary structure comprises 103 residues: G0/G1 switch protein 2 (103 aa).

The disordered stretch occupies residues 80–103 (LQEKGKQQDTVLGGRALSNRQHAS).

In terms of assembly, directly interacts with BCL2; this interaction prevents the formation of the anti-apoptotic BAX-BCL2 complex. As to expression, widely expressed with highest levels in peripheral blood, skeletal muscle and heart, followed by kidney and liver.

It localises to the mitochondrion. In terms of biological role, promotes apoptosis by binding to BCL2, hence preventing the formation of protective BCL2-BAX heterodimers. The protein is G0/G1 switch protein 2 (G0S2) of Homo sapiens (Human).